A 662-amino-acid polypeptide reads, in one-letter code: Calcium-dependent protease (662 aa).

The 334-residue stretch at 196–529 (QWHLKQTTIG…YGRINALKAV (334 aa)) folds into the Peptidase S8 domain. Residues Asp233, His270, and Ser466 each act as charge relay system in the active site. The 128-residue stretch at 535-662 (AQPEPVSIFT…IRSLTIELGF (128 aa)) folds into the P/Homo B domain.

Belongs to the peptidase S8 family.

The protein resides in the cytoplasm. Its function is as follows. Degrades phycobiliproteins in vitro. Has a substrate specificity similar to that of trypsin. This is Calcium-dependent protease (prcA) from Trichormus variabilis (strain ATCC 29413 / PCC 7937) (Anabaena variabilis).